Here is a 508-residue protein sequence, read N- to C-terminus: ATP synthase subunit alpha, chloroplastic (508 aa).

ATP is bound at residue 173–180; sequence GDRQTGKT.

The protein belongs to the ATPase alpha/beta chains family. As to quaternary structure, F-type ATPases have 2 components, CF(1) - the catalytic core - and CF(0) - the membrane proton channel. CF(1) has five subunits: alpha(3), beta(3), gamma(1), delta(1), epsilon(1). CF(0) has four main subunits: a, b, b' and c.

It localises to the plastid. The protein resides in the chloroplast thylakoid membrane. The catalysed reaction is ATP + H2O + 4 H(+)(in) = ADP + phosphate + 5 H(+)(out). Produces ATP from ADP in the presence of a proton gradient across the membrane. The alpha chain is a regulatory subunit. This Chara vulgaris (Common stonewort) protein is ATP synthase subunit alpha, chloroplastic.